The sequence spans 450 residues: MKSITQLENKKVLVLGLAKSGEAAARLLAKLGAIVTVNDGKAFEENPSAQSLLEEGIKVVCGGHPLELLDENFELMVKNPGIRYDNPMVARALEKEIPVWTEVELAYLVSEAPIIGITGSNGKTTTTTMIADVLNHGGKSGVLSGNIGFPASEVAQSVTNQDTLVMELSSFQLMGIESFHPHIAVITNLMPTHIDYHGSFEEYVAAKWNIQNEMTSDDFIILNFNQDLAKELATQTNAQVVPFSTVEKVDGAYLENGGLYFKGELLMHADELGVPGSHNVENALATIAVAKLSGVSNQAIKETLSSFGGVKHRLQFVDTIDDVKFYNDSKSTNILATQKALSGFDNSKVILIAGGLDRGNEFDELIPDITGLKKMVILGESAPRVKRAADKAGVTYLDAKDVADATRIAFEQASAGDVVLLSPANASWDMYKNFEVRGDEFITTVERLKG.

119 to 125 provides a ligand contact to ATP; sequence GSNGKTT.

It belongs to the MurCDEF family.

Its subcellular location is the cytoplasm. The enzyme catalyses UDP-N-acetyl-alpha-D-muramoyl-L-alanine + D-glutamate + ATP = UDP-N-acetyl-alpha-D-muramoyl-L-alanyl-D-glutamate + ADP + phosphate + H(+). It participates in cell wall biogenesis; peptidoglycan biosynthesis. In terms of biological role, cell wall formation. Catalyzes the addition of glutamate to the nucleotide precursor UDP-N-acetylmuramoyl-L-alanine (UMA). The chain is UDP-N-acetylmuramoylalanine--D-glutamate ligase from Streptococcus thermophilus (strain CNRZ 1066).